A 635-amino-acid polypeptide reads, in one-letter code: Extracellular metalloproteinase MEP (635 aa).

The first 19 residues, 1–19 (MRYSLSLALLGVAAVTVVA), serve as a signal peptide directing secretion. Residues 20-242 (HPHTPGRHGV…VHGVVDYVSH (223 aa)) constitute a propeptide that is removed on maturation. H428 contacts Zn(2+). The active site involves E429. Residue H432 participates in Zn(2+) binding. The N-linked (GlcNAc...) asparagine glycan is linked to N473.

The protein belongs to the peptidase M36 family. Zn(2+) is required as a cofactor.

It localises to the secreted. Secreted metalloproteinase that allows assimilation of proteinaceous substrates. The chain is Extracellular metalloproteinase MEP (MEP) from Pyricularia oryzae (strain 70-15 / ATCC MYA-4617 / FGSC 8958) (Rice blast fungus).